The chain runs to 596 residues: uncharacterized protein (596 aa).

The disordered stretch occupies residues 1 to 31 (MSTSNDPVVSSHDPIKQEKEQETDLEAQVEH). Residues 1–37 (MSTSNDPVVSSHDPIKQEKEQETDLEAQVEHKKRNER) are Cytoplasmic-facing. Over residues 13–22 (DPIKQEKEQE) the composition is skewed to basic and acidic residues. Residues 38-58 (GNAFVGFLILIFVYYLLRGGS) form a helical membrane-spanning segment. At 59 to 596 (NDNDKQEMSH…ILVSDSGEEA (538 aa)) the chain is on the lumenal side. Asn-118 is a glycosylation site (N-linked (GlcNAc...) asparagine). His-197 is a binding site for Zn(2+). Residue Asp-199 is part of the active site. Asp-232 serves as a coordination point for Zn(2+). Glu-266 (proton acceptor) is an active-site residue. 2 residues coordinate Zn(2+): Glu-267 and Asp-295. N-linked (GlcNAc...) asparagine glycans are attached at residues Asn-466, Asn-541, and Asn-555. His-565 lines the Zn(2+) pocket.

The protein belongs to the peptidase M20A family. The cofactor is Zn(2+).

It is found in the vacuole membrane. This is an uncharacterized protein from Schizosaccharomyces pombe (strain 972 / ATCC 24843) (Fission yeast).